The sequence spans 170 residues: uncharacterized protein (170 aa).

It is found in the mitochondrion. This is an uncharacterized protein from Arabidopsis thaliana (Mouse-ear cress).